A 223-amino-acid polypeptide reads, in one-letter code: Small ribosomal subunit protein uS5 (223 aa).

The disordered stretch occupies residues 1–66 (MPPQQQRGRG…AERAQAETEF (66 aa)). Positions 13–22 (RGPGGPGGPG) are enriched in gly residues. The span at 53 to 66 (GGDKAERAQAETEF) shows a compositional bias: basic and acidic residues. Positions 66–129 (FQERVVQIRR…SDARKALIRV (64 aa)) constitute an S5 DRBM domain.

This sequence belongs to the universal ribosomal protein uS5 family. Part of the 30S ribosomal subunit. Contacts proteins S4 and S8.

In terms of biological role, with S4 and S12 plays an important role in translational accuracy. Its function is as follows. Located at the back of the 30S subunit body where it stabilizes the conformation of the head with respect to the body. The chain is Small ribosomal subunit protein uS5 from Gloeobacter violaceus (strain ATCC 29082 / PCC 7421).